Reading from the N-terminus, the 152-residue chain is Large ribosomal subunit protein uL30 (152 aa).

The protein belongs to the universal ribosomal protein uL30 family. Part of the 50S ribosomal subunit.

This chain is Large ribosomal subunit protein uL30, found in Archaeoglobus fulgidus (strain ATCC 49558 / DSM 4304 / JCM 9628 / NBRC 100126 / VC-16).